A 238-amino-acid chain; its full sequence is Probable septum site-determining protein MinC (238 aa).

It belongs to the MinC family. In terms of assembly, interacts with MinD and FtsZ.

Functionally, cell division inhibitor that blocks the formation of polar Z ring septums. Rapidly oscillates between the poles of the cell to destabilize FtsZ filaments that have formed before they mature into polar Z rings. Prevents FtsZ polymerization. The chain is Probable septum site-determining protein MinC from Xylella fastidiosa (strain M23).